We begin with the raw amino-acid sequence, 138 residues long: Succinate dehydrogenase assembly factor 4, mitochondrial (138 aa).

Residues 1-32 constitute a mitochondrion transit peptide; the sequence is MLCAIKSTGYRYPRTGALNLLRGRPFNMATRK. The span at 71 to 98 shows a compositional bias: polar residues; that stretch reads QATGDRTKESLNSPLLTKNDIGSFSPEF. The interval 71–138 is disordered; that stretch reads QATGDRTKES…YSFNGRVTDF (68 aa).

This sequence belongs to the SDHAF4 family. Interacts with SDH1 in its FAD-bound form.

It localises to the mitochondrion matrix. In terms of biological role, plays an essential role in the assembly of succinate dehydrogenase (SDH), an enzyme complex (also referred to as respiratory complex II) that is a component of both the tricarboxylic acid (TCA) cycle and the mitochondrial electron transport chain, and which couples the oxidation of succinate to fumarate with the reduction of ubiquinone (coenzyme Q) to ubiquinol. Binds to the flavoprotein subunit SDH1 in its FAD-bound form, blocking the generation of excess reactive oxygen species (ROS) and facilitating its assembly with the iron-sulfur protein subunit SDH2 into the SDH catalytic dimer. The chain is Succinate dehydrogenase assembly factor 4, mitochondrial from Saccharomyces cerevisiae (strain ATCC 204508 / S288c) (Baker's yeast).